Reading from the N-terminus, the 353-residue chain is Phosphate acyltransferase (353 aa).

This sequence belongs to the PlsX family. As to quaternary structure, homodimer. Probably interacts with PlsY.

The protein localises to the cytoplasm. It catalyses the reaction a fatty acyl-[ACP] + phosphate = an acyl phosphate + holo-[ACP]. It functions in the pathway lipid metabolism; phospholipid metabolism. Catalyzes the reversible formation of acyl-phosphate (acyl-PO(4)) from acyl-[acyl-carrier-protein] (acyl-ACP). This enzyme utilizes acyl-ACP as fatty acyl donor, but not acyl-CoA. The protein is Phosphate acyltransferase of Bradyrhizobium sp. (strain BTAi1 / ATCC BAA-1182).